The following is a 259-amino-acid chain: MTTFTVIIPARFASSRLPGKPLADIAGKPMIRHVWEKARRSGASRVVVATDNEQVKNAVLQFGGEVCMTSEKHNSGTERLAEVVEKLDIADDEIIVNIQGDEPLIPPVIVQQVAANLAKYRVNMASLAVKIEDVQELFNPNAVKVLTDQAGYVLYFSRAAIPWNRDEFADIAANTKNLDDLRLGDHYLRHIGIYAYRAGFIKRYVQWQPTALEKIESLEQLRVLWYGERIHVELAEEVPAVGVDTPEDLEKVRSILTAF.

Belongs to the KdsB family.

It localises to the cytoplasm. The catalysed reaction is 3-deoxy-alpha-D-manno-oct-2-ulosonate + CTP = CMP-3-deoxy-beta-D-manno-octulosonate + diphosphate. The protein operates within nucleotide-sugar biosynthesis; CMP-3-deoxy-D-manno-octulosonate biosynthesis; CMP-3-deoxy-D-manno-octulosonate from 3-deoxy-D-manno-octulosonate and CTP: step 1/1. Its pathway is bacterial outer membrane biogenesis; lipopolysaccharide biosynthesis. Its function is as follows. Activates KDO (a required 8-carbon sugar) for incorporation into bacterial lipopolysaccharide in Gram-negative bacteria. The sequence is that of 3-deoxy-manno-octulosonate cytidylyltransferase from Actinobacillus succinogenes (strain ATCC 55618 / DSM 22257 / CCUG 43843 / 130Z).